Reading from the N-terminus, the 420-residue chain is Histidine--tRNA ligase (420 aa).

It belongs to the class-II aminoacyl-tRNA synthetase family. In terms of assembly, homodimer.

It is found in the cytoplasm. It carries out the reaction tRNA(His) + L-histidine + ATP = L-histidyl-tRNA(His) + AMP + diphosphate + H(+). The protein is Histidine--tRNA ligase of Mycobacterium marinum (strain ATCC BAA-535 / M).